Reading from the N-terminus, the 175-residue chain is Large ribosomal subunit protein uL10 (175 aa).

The protein belongs to the universal ribosomal protein uL10 family. As to quaternary structure, part of the ribosomal stalk of the 50S ribosomal subunit. The N-terminus interacts with L11 and the large rRNA to form the base of the stalk. The C-terminus forms an elongated spine to which L12 dimers bind in a sequential fashion forming a multimeric L10(L12)X complex.

Its function is as follows. Forms part of the ribosomal stalk, playing a central role in the interaction of the ribosome with GTP-bound translation factors. This Prochlorococcus marinus (strain SARG / CCMP1375 / SS120) protein is Large ribosomal subunit protein uL10.